The sequence spans 524 residues: Phosphoenolpyruvate carboxykinase (ATP) (524 aa).

The substrate site is built by Arg52, Tyr188, and Lys194. Residues Lys194, His213, and Gly229–Thr237 each bind ATP. Mn(2+) contacts are provided by Lys194 and His213. Position 250 (Asp250) interacts with Mn(2+). 3 residues coordinate ATP: Glu278, Arg314, and Thr439. Residue Arg314 participates in substrate binding.

The protein belongs to the phosphoenolpyruvate carboxykinase (ATP) family. It depends on Mn(2+) as a cofactor.

It localises to the cytoplasm. It carries out the reaction oxaloacetate + ATP = phosphoenolpyruvate + ADP + CO2. It functions in the pathway carbohydrate biosynthesis; gluconeogenesis. In terms of biological role, involved in the gluconeogenesis. Catalyzes the conversion of oxaloacetate (OAA) to phosphoenolpyruvate (PEP) through direct phosphoryl transfer between the nucleoside triphosphate and OAA. In Campylobacter jejuni (strain RM1221), this protein is Phosphoenolpyruvate carboxykinase (ATP).